The primary structure comprises 468 residues: Cysteine--tRNA ligase (468 aa).

Cys29 serves as a coordination point for Zn(2+). The short motif at Pro31–Asn41 is the 'HIGH' region element. Cys209, His234, and Glu238 together coordinate Zn(2+). The 'KMSKS' region signature appears at Lys266–Ser270. Lys269 contributes to the ATP binding site.

It belongs to the class-I aminoacyl-tRNA synthetase family. As to quaternary structure, monomer. The cofactor is Zn(2+).

The protein localises to the cytoplasm. The catalysed reaction is tRNA(Cys) + L-cysteine + ATP = L-cysteinyl-tRNA(Cys) + AMP + diphosphate. This chain is Cysteine--tRNA ligase, found in Brevibacillus brevis (strain 47 / JCM 6285 / NBRC 100599).